The primary structure comprises 184 residues: Probable cobalt-precorrin-6B C(15)-methyltransferase (decarboxylating) (184 aa).

Residues threonine 12, 36-40 (GCGTG), aspartate 59, and alanine 87 contribute to the S-adenosyl-L-methionine site.

It belongs to the methyltransferase superfamily. Archaeal-type CbiT family.

It carries out the reaction Co-precorrin-6B + S-adenosyl-L-methionine = Co-precorrin-7 + S-adenosyl-L-homocysteine + CO2. It functions in the pathway cofactor biosynthesis; adenosylcobalamin biosynthesis; cob(II)yrinate a,c-diamide from sirohydrochlorin (anaerobic route): step 8/10. Functionally, catalyzes the methylation of C-15 in cobalt-precorrin-6B followed by the decarboxylation of C-12 to form cobalt-precorrin-7. This chain is Probable cobalt-precorrin-6B C(15)-methyltransferase (decarboxylating), found in Methanosarcina mazei (strain ATCC BAA-159 / DSM 3647 / Goe1 / Go1 / JCM 11833 / OCM 88) (Methanosarcina frisia).